The primary structure comprises 98 residues: MASINLNIIMAFIMALMGVLIYRSHLMSTLLCLEGMMLSLFILVTLLISQSHMLTTSMMPLILLVFSACEAGVGLALLVTISTTYGNDHVQNLNLLQC.

3 helical membrane-spanning segments follow: residues 1-21, 28-48, and 61-81; these read MASI…GVLI, STLL…TLLI, and LILL…LVTI.

It belongs to the complex I subunit 4L family. Core subunit of respiratory chain NADH dehydrogenase (Complex I) which is composed of 45 different subunits.

It is found in the mitochondrion inner membrane. It catalyses the reaction a ubiquinone + NADH + 5 H(+)(in) = a ubiquinol + NAD(+) + 4 H(+)(out). Its function is as follows. Core subunit of the mitochondrial membrane respiratory chain NADH dehydrogenase (Complex I) which catalyzes electron transfer from NADH through the respiratory chain, using ubiquinone as an electron acceptor. Part of the enzyme membrane arm which is embedded in the lipid bilayer and involved in proton translocation. The chain is NADH-ubiquinone oxidoreductase chain 4L (MT-ND4L) from Thylamys elegans (Elegant fat-tailed mouse opossum).